We begin with the raw amino-acid sequence, 239 residues long: MTRAVCLLSGGLDSPTVLAYALSNGYEVFPLSFDYGQRHKKELESSKKICDYYHLNLKIIKIDLRAIGHSALTDNIDVPENDLKSIGNDIPVTYVPARNTIFLSIAAAYAETLNANEIFIGANAIDYSGYPDCRPEYFNKMEEALSLGTSIGLRNGIKINVPLQYLTKSDIVKLGRKLKVPYKLTWSCYNGRKKACGKCDSCLLRLKGFMEAGDFDDIEYEDYPEFYKTYLKNKHFDKF.

8 to 18 (LSGGLDSPTVL) lines the ATP pocket. Residues C188, C196, C199, and C202 each contribute to the Zn(2+) site.

Belongs to the QueC family. The cofactor is Zn(2+).

It carries out the reaction 7-carboxy-7-deazaguanine + NH4(+) + ATP = 7-cyano-7-deazaguanine + ADP + phosphate + H2O + H(+). It functions in the pathway purine metabolism; 7-cyano-7-deazaguanine biosynthesis. In terms of biological role, catalyzes the ATP-dependent conversion of 7-carboxy-7-deazaguanine (CDG) to 7-cyano-7-deazaguanine (preQ(0)). The sequence is that of 7-cyano-7-deazaguanine synthase from Picrophilus torridus (strain ATCC 700027 / DSM 9790 / JCM 10055 / NBRC 100828 / KAW 2/3).